We begin with the raw amino-acid sequence, 98 residues long: Large ribosomal subunit protein uL23 (98 aa).

This sequence belongs to the universal ribosomal protein uL23 family. Part of the 50S ribosomal subunit. Contacts protein L29, and trigger factor when it is bound to the ribosome.

One of the early assembly proteins it binds 23S rRNA. One of the proteins that surrounds the polypeptide exit tunnel on the outside of the ribosome. Forms the main docking site for trigger factor binding to the ribosome. This Ruegeria sp. (strain TM1040) (Silicibacter sp.) protein is Large ribosomal subunit protein uL23.